The primary structure comprises 342 residues: MTSILSPEKSQNDQELPLRPSYLQEFVGQQQIKENLSVFIRAAKSRGEHLDHTLFYGPPGLGKTTLAKIISNEIGGNFKSTSGPAILKAADLAAILTNLEKNDVLFIDEIHRLNTSVEEVLYPAMEDFELDIIIGEGPAARSVKINLPQFTLIGATTRLGLLSNPLRDRFGIPMRLNFYNTEELKKVLNRASKLLDIDLTDSGSEEIARRSRGTPRIALRLLRRIRDFAAVNNQLEIDKEIANFGLNRLEVDIIGLDSNDYRYLKFIADNYNGGPVGIETIAAALSEQRDALEETIEPYLIQIGLLQRTPRGRVITATAFEHLKIPLPTSPTHQFNIFNDNE.

Residues M1 to Y179 are large ATPase domain (RuvB-L). Residues L18, R19, G60, K63, T64, T65, E126–F128, R169, Y179, and R216 contribute to the ATP site. T64 contributes to the Mg(2+) binding site. A small ATPAse domain (RuvB-S) region spans residues N180–E250. The interval I253–E342 is head domain (RuvB-H). Residues R289, R308, and R313 each contribute to the DNA site.

The protein belongs to the RuvB family. Homohexamer. Forms an RuvA(8)-RuvB(12)-Holliday junction (HJ) complex. HJ DNA is sandwiched between 2 RuvA tetramers; dsDNA enters through RuvA and exits via RuvB. An RuvB hexamer assembles on each DNA strand where it exits the tetramer. Each RuvB hexamer is contacted by two RuvA subunits (via domain III) on 2 adjacent RuvB subunits; this complex drives branch migration. In the full resolvosome a probable DNA-RuvA(4)-RuvB(12)-RuvC(2) complex forms which resolves the HJ.

It localises to the cytoplasm. It catalyses the reaction ATP + H2O = ADP + phosphate + H(+). In terms of biological role, the RuvA-RuvB-RuvC complex processes Holliday junction (HJ) DNA during genetic recombination and DNA repair, while the RuvA-RuvB complex plays an important role in the rescue of blocked DNA replication forks via replication fork reversal (RFR). RuvA specifically binds to HJ cruciform DNA, conferring on it an open structure. The RuvB hexamer acts as an ATP-dependent pump, pulling dsDNA into and through the RuvAB complex. RuvB forms 2 homohexamers on either side of HJ DNA bound by 1 or 2 RuvA tetramers; 4 subunits per hexamer contact DNA at a time. Coordinated motions by a converter formed by DNA-disengaged RuvB subunits stimulates ATP hydrolysis and nucleotide exchange. Immobilization of the converter enables RuvB to convert the ATP-contained energy into a lever motion, pulling 2 nucleotides of DNA out of the RuvA tetramer per ATP hydrolyzed, thus driving DNA branch migration. The RuvB motors rotate together with the DNA substrate, which together with the progressing nucleotide cycle form the mechanistic basis for DNA recombination by continuous HJ branch migration. Branch migration allows RuvC to scan DNA until it finds its consensus sequence, where it cleaves and resolves cruciform DNA. The chain is Holliday junction branch migration complex subunit RuvB from Rickettsia bellii (strain RML369-C).